The chain runs to 300 residues: Ribosomal RNA small subunit methyltransferase H (300 aa).

S-adenosyl-L-methionine is bound by residues 35–37 (GGH), Asp-55, Phe-82, Asp-100, and Gln-107.

Belongs to the methyltransferase superfamily. RsmH family.

The protein resides in the cytoplasm. The enzyme catalyses cytidine(1402) in 16S rRNA + S-adenosyl-L-methionine = N(4)-methylcytidine(1402) in 16S rRNA + S-adenosyl-L-homocysteine + H(+). Functionally, specifically methylates the N4 position of cytidine in position 1402 (C1402) of 16S rRNA. The protein is Ribosomal RNA small subunit methyltransferase H of Chlamydia trachomatis serovar A (strain ATCC VR-571B / DSM 19440 / HAR-13).